The primary structure comprises 506 residues: ATP synthase subunit alpha (506 aa).

170 to 177 serves as a coordination point for ATP; it reads GDRQTGKT.

The protein belongs to the ATPase alpha/beta chains family. F-type ATPases have 2 components, CF(1) - the catalytic core - and CF(0) - the membrane proton channel. CF(1) has five subunits: alpha(3), beta(3), gamma(1), delta(1), epsilon(1). CF(0) has four main subunits: a(1), b(1), b'(1) and c(9-12).

It localises to the cellular thylakoid membrane. The enzyme catalyses ATP + H2O + 4 H(+)(in) = ADP + phosphate + 5 H(+)(out). Functionally, produces ATP from ADP in the presence of a proton gradient across the membrane. The alpha chain is a regulatory subunit. The sequence is that of ATP synthase subunit alpha from Synechococcus sp. (strain CC9605).